Here is a 432-residue protein sequence, read N- to C-terminus: Eukaryotic translation initiation factor 3 subunit M (432 aa).

Residues 184 to 356 enclose the PCI domain; the sequence is EEEEAYQHIL…KVFLIHSVRY (173 aa). Basic and acidic residues-rich tracts occupy residues 392 to 401 and 423 to 432; these read AQQEAERKLV and QHRERNDNDD. The disordered stretch occupies residues 392 to 432; it reads AQQEAERKLVEASTQHNNDRGNQRRGGNRGQQHRERNDNDD.

The protein belongs to the eIF-3 subunit M family. In terms of assembly, component of the eukaryotic translation initiation factor 3 (eIF-3) complex.

The protein localises to the cytoplasm. Its function is as follows. Component of the eukaryotic translation initiation factor 3 (eIF-3) complex, which is involved in protein synthesis of a specialized repertoire of mRNAs and, together with other initiation factors, stimulates binding of mRNA and methionyl-tRNAi to the 40S ribosome. The eIF-3 complex specifically targets and initiates translation of a subset of mRNAs involved in cell proliferation. The sequence is that of Eukaryotic translation initiation factor 3 subunit M from Pyricularia oryzae (strain 70-15 / ATCC MYA-4617 / FGSC 8958) (Rice blast fungus).